The chain runs to 570 residues: MSASKEVRSCLWTQSLRRELSGYCSNIKLQVVKDAQALLHGLDFSEVSNVQRLMRKQKRDDGDLKRLRDLNQAVNNLVELKSTQQKSVLRVGTLSSDDLLILAADLEKLKSKVTRTERPLSSGVYMGNLSSQQLDQRRALLNMIGMTGVSGGGKGASNGIVRVWDVKNAELLNNQFGTMPSLTLACLTKQGQVDLNDAVQALTDLGLIYTAKYPNSSDLDRLSQSHPILNMIDTKKSSLNISGYNFSLGAAVKAGACMLDGGNMLETIKVSPQTMDGILKSILKVKKSLGMFVSDTPGERNPYENILYKICLSGDGWSYIASRTSIVGRAWENTVVDLEQDNKPQKIGNGGSNKSLQSAGFAAGLIYSQLMTLKDFKCFNLIPNAKTWMDIEGRPEDPVEIALYQPSSGCYVHFFREPTDLKQFKQDAKYSHGRDVTDLFAAQPGLTSAVIEALPRNMVITCQGSEDIRKLLESQGRRDIKLIDITLSKADSRKFENAVWDQFKDLCHMHTGVVVEKKKRGGKEEITPHCALMDCIMFDAAVSGGLDAKVLRVVLPRDMVFRTSTPKVVL.

The segment at 54-241 (MRKQKRDDGD…IDTKKSSLNI (188 aa)) is binding site for the cap structure m7GTP. Mn(2+) contacts are provided by Asp390 and Glu392. Zn(2+)-binding residues include Glu400, Cys507, His510, and Cys530. A Mn(2+)-binding site is contributed by Asp534.

Belongs to the arenaviridae nucleocapsid protein family. Homomultimerizes to form the nucleocapsid. Binds to viral genomic RNA. Interacts with glycoprotein G2. Interacts with protein Z; this interaction probably directs the encapsidated genome to budding sites. Interacts with protein L; this interaction does not interfere with Z-L interaction. Interacts with host IKBKE (via Protein kinase domain); the interaction inhibits IKBKE kinase activity.

The protein resides in the virion. It is found in the host cytoplasm. Functionally, encapsidates the genome, protecting it from nucleases. The encapsidated genomic RNA is termed the nucleocapsid (NC). Serves as template for viral transcription and replication. The increased presence of protein N in host cell does not seem to trigger the switch from transcription to replication as observed in other negative strain RNA viruses. Through the interaction with host IKBKE, strongly inhibits the phosphorylation and nuclear translocation of host IRF3, a protein involved in interferon activation pathway, leading to the inhibition of interferon-beta and IRF3-dependent promoters activation. Also encodes a functional 3'-5' exoribonuclease that degrades preferentially dsRNA substrates and thereby participates in the suppression of interferon induction. This is Nucleoprotein from Homo sapiens (Human).